The primary structure comprises 257 residues: Zinc import ATP-binding protein ZnuC (257 aa).

One can recognise an ABC transporter domain in the interval 5 to 220 (VELQSVTVTF…PSYVALFGQQ (216 aa)). 37–44 (GPNGAGKS) is an ATP binding site. The disordered stretch occupies residues 234–257 (HEHDLAGSPVGPCQHNKQHGHDNA).

It belongs to the ABC transporter superfamily. Zinc importer (TC 3.A.1.15.5) family. In terms of assembly, the complex is composed of two ATP-binding proteins (ZnuC), two transmembrane proteins (ZnuB) and a solute-binding protein (ZnuA).

Its subcellular location is the cell inner membrane. The enzyme catalyses Zn(2+)(out) + ATP(in) + H2O(in) = Zn(2+)(in) + ADP(in) + phosphate(in) + H(+)(in). In terms of biological role, part of the ABC transporter complex ZnuABC involved in zinc import. Responsible for energy coupling to the transport system. This Photobacterium profundum (strain SS9) protein is Zinc import ATP-binding protein ZnuC.